Consider the following 704-residue polypeptide: Polyribonucleotide nucleotidyltransferase (704 aa).

Mg(2+)-binding residues include Asp487 and Asp493. The region spanning 554-613 is the KH domain; sequence PRLLTIKIHPDKIREVIGKGGSTIQAITKETGTQIDIQDDGTIIIASVNAIAAQAAKSRI. The S1 motif domain occupies 623–691; the sequence is GRIYEGKVAK…KQGRIRLSIK (69 aa).

The protein belongs to the polyribonucleotide nucleotidyltransferase family. In terms of assembly, component of the RNA degradosome, which is a multiprotein complex involved in RNA processing and mRNA degradation. Requires Mg(2+) as cofactor.

It localises to the cytoplasm. The enzyme catalyses RNA(n+1) + phosphate = RNA(n) + a ribonucleoside 5'-diphosphate. Involved in mRNA degradation. Catalyzes the phosphorolysis of single-stranded polyribonucleotides processively in the 3'- to 5'-direction. This chain is Polyribonucleotide nucleotidyltransferase, found in Xanthomonas oryzae pv. oryzae (strain MAFF 311018).